Here is a 287-residue protein sequence, read N- to C-terminus: Lipoyl synthase (287 aa).

[4Fe-4S] cluster-binding residues include cysteine 34, cysteine 39, cysteine 45, cysteine 60, cysteine 64, cysteine 67, and serine 273. The Radical SAM core domain occupies 46-262 (WNKRHATVMI…KYIAYSKGFL (217 aa)).

The protein belongs to the radical SAM superfamily. Lipoyl synthase family. It depends on [4Fe-4S] cluster as a cofactor.

It is found in the cytoplasm. The enzyme catalyses [[Fe-S] cluster scaffold protein carrying a second [4Fe-4S](2+) cluster] + N(6)-octanoyl-L-lysyl-[protein] + 2 oxidized [2Fe-2S]-[ferredoxin] + 2 S-adenosyl-L-methionine + 4 H(+) = [[Fe-S] cluster scaffold protein] + N(6)-[(R)-dihydrolipoyl]-L-lysyl-[protein] + 4 Fe(3+) + 2 hydrogen sulfide + 2 5'-deoxyadenosine + 2 L-methionine + 2 reduced [2Fe-2S]-[ferredoxin]. The protein operates within protein modification; protein lipoylation via endogenous pathway; protein N(6)-(lipoyl)lysine from octanoyl-[acyl-carrier-protein]: step 2/2. In terms of biological role, catalyzes the radical-mediated insertion of two sulfur atoms into the C-6 and C-8 positions of the octanoyl moiety bound to the lipoyl domains of lipoate-dependent enzymes, thereby converting the octanoylated domains into lipoylated derivatives. In Wolbachia pipientis wMel, this protein is Lipoyl synthase.